The primary structure comprises 419 residues: Ribosome biogenesis protein WDR12 homolog (419 aa).

The tract at residues 10 to 91 (VQVHLKTKQE…EDAIEIEYVE (82 aa)) is ubiquitin-like (UBL) domain. WD repeat units follow at residues 103 to 141 (LHDDWVSAVKASGKWILTGCYDNTLNIWTNKGKHILTIP), 142 to 184 (GHTA…NTVE), 191 to 230 (GHERGVDSVSVSPDGQRFATGSWDTMLKVWSAELEDAGEG), 249 to 287 (GHRESISAVQWMDASTLLTGSWDHTLKVWDLSLEGIKAE), 289 to 328 (STNKSIFDASYSKLNHLILTASADKNLRLYDSRTNQGSVV), 334 to 374 (GHNA…APLY), and 378 to 416 (GHGEKVLDIDWTNPKYIVSGGSDNTVRVFKSRKALVENM).

It belongs to the WD repeat WDR12/YTM1 family.

It localises to the nucleus. The protein localises to the nucleolus. Its subcellular location is the nucleoplasm. Functionally, required for maturation of ribosomal RNAs and formation of the large ribosomal subunit. The polypeptide is Ribosome biogenesis protein WDR12 homolog (Drosophila persimilis (Fruit fly)).